Here is a 486-residue protein sequence, read N- to C-terminus: Glutamyl-tRNA(Gln) amidotransferase subunit A (486 aa).

Active-site charge relay system residues include Lys74 and Ser149. Ser173 functions as the Acyl-ester intermediate in the catalytic mechanism.

The protein belongs to the amidase family. GatA subfamily. Heterotrimer of A, B and C subunits.

The catalysed reaction is L-glutamyl-tRNA(Gln) + L-glutamine + ATP + H2O = L-glutaminyl-tRNA(Gln) + L-glutamate + ADP + phosphate + H(+). Functionally, allows the formation of correctly charged Gln-tRNA(Gln) through the transamidation of misacylated Glu-tRNA(Gln) in organisms which lack glutaminyl-tRNA synthetase. The reaction takes place in the presence of glutamine and ATP through an activated gamma-phospho-Glu-tRNA(Gln). This chain is Glutamyl-tRNA(Gln) amidotransferase subunit A, found in Prochlorococcus marinus (strain NATL2A).